Consider the following 579-residue polypeptide: A-type ATP synthase subunit A (579 aa).

229-236 (GPFGSGKT) is an ATP binding site.

The protein belongs to the ATPase alpha/beta chains family. In terms of assembly, has multiple subunits with at least A(3), B(3), C, D, E, F, H, I and proteolipid K(x).

It is found in the cell membrane. The enzyme catalyses ATP + H2O + 4 H(+)(in) = ADP + phosphate + 5 H(+)(out). Component of the A-type ATP synthase that produces ATP from ADP in the presence of a proton gradient across the membrane. The A chain is the catalytic subunit. The protein is A-type ATP synthase subunit A of Methanocella arvoryzae (strain DSM 22066 / NBRC 105507 / MRE50).